Here is a 559-residue protein sequence, read N- to C-terminus: Dihydroxy-acid dehydratase (559 aa).

Residue C52 participates in [2Fe-2S] cluster binding. D84 provides a ligand contact to Mg(2+). C125 lines the [2Fe-2S] cluster pocket. Residues D126 and K127 each coordinate Mg(2+). An N6-carboxylysine modification is found at K127. C197 is a binding site for [2Fe-2S] cluster. E447 serves as a coordination point for Mg(2+). The active-site Proton acceptor is S473.

This sequence belongs to the IlvD/Edd family. Homodimer. The cofactor is [2Fe-2S] cluster. Requires Mg(2+) as cofactor.

It catalyses the reaction (2R)-2,3-dihydroxy-3-methylbutanoate = 3-methyl-2-oxobutanoate + H2O. It carries out the reaction (2R,3R)-2,3-dihydroxy-3-methylpentanoate = (S)-3-methyl-2-oxopentanoate + H2O. It participates in amino-acid biosynthesis; L-isoleucine biosynthesis; L-isoleucine from 2-oxobutanoate: step 3/4. It functions in the pathway amino-acid biosynthesis; L-valine biosynthesis; L-valine from pyruvate: step 3/4. Functionally, functions in the biosynthesis of branched-chain amino acids. Catalyzes the dehydration of (2R,3R)-2,3-dihydroxy-3-methylpentanoate (2,3-dihydroxy-3-methylvalerate) into 2-oxo-3-methylpentanoate (2-oxo-3-methylvalerate) and of (2R)-2,3-dihydroxy-3-methylbutanoate (2,3-dihydroxyisovalerate) into 2-oxo-3-methylbutanoate (2-oxoisovalerate), the penultimate precursor to L-isoleucine and L-valine, respectively. This Roseiflexus castenholzii (strain DSM 13941 / HLO8) protein is Dihydroxy-acid dehydratase.